The sequence spans 242 residues: Putative prolyl 4-hydroxylase (242 aa).

In terms of domain architecture, Fe2OG dioxygenase spans 128–238 (NAEDLQVVRY…KWIANLWFRE (111 aa)).

The protein belongs to the P4HA family. The cofactor is Fe cation. Requires L-ascorbate as cofactor.

The protein localises to the virion. The catalysed reaction is L-prolyl-[collagen] + 2-oxoglutarate + O2 = trans-4-hydroxy-L-prolyl-[collagen] + succinate + CO2. Functionally, may catalyze the post-translational formation of 4-hydroxyproline in -Xaa-Pro-Gly- sequences in the 6 collagen-like proteins of Mimivirus. The protein is Putative prolyl 4-hydroxylase of Acanthamoeba polyphaga mimivirus (APMV).